We begin with the raw amino-acid sequence, 345 residues long: Phosphate acyltransferase (345 aa).

The protein belongs to the PlsX family. Homodimer. Probably interacts with PlsY.

It is found in the cytoplasm. It catalyses the reaction a fatty acyl-[ACP] + phosphate = an acyl phosphate + holo-[ACP]. It participates in lipid metabolism; phospholipid metabolism. Catalyzes the reversible formation of acyl-phosphate (acyl-PO(4)) from acyl-[acyl-carrier-protein] (acyl-ACP). This enzyme utilizes acyl-ACP as fatty acyl donor, but not acyl-CoA. This Levilactobacillus brevis (strain ATCC 367 / BCRC 12310 / CIP 105137 / JCM 1170 / LMG 11437 / NCIMB 947 / NCTC 947) (Lactobacillus brevis) protein is Phosphate acyltransferase.